We begin with the raw amino-acid sequence, 577 residues long: Sulfite reductase [NADPH] hemoprotein beta-component (577 aa).

[4Fe-4S] cluster-binding residues include Cys-440, Cys-446, Cys-486, and Cys-490. Siroheme is bound at residue Cys-490.

It belongs to the nitrite and sulfite reductase 4Fe-4S domain family. As to quaternary structure, alpha(8)-beta(8). The alpha component is a flavoprotein, the beta component is a hemoprotein. The cofactor is siroheme. [4Fe-4S] cluster serves as cofactor.

It carries out the reaction hydrogen sulfide + 3 NADP(+) + 3 H2O = sulfite + 3 NADPH + 4 H(+). Its pathway is sulfur metabolism; hydrogen sulfide biosynthesis; hydrogen sulfide from sulfite (NADPH route): step 1/1. Component of the sulfite reductase complex that catalyzes the 6-electron reduction of sulfite to sulfide. This is one of several activities required for the biosynthesis of L-cysteine from sulfate. The polypeptide is Sulfite reductase [NADPH] hemoprotein beta-component (Vibrio cholerae serotype O1 (strain ATCC 39315 / El Tor Inaba N16961)).